The chain runs to 145 residues: Basic phospholipase A2 cPt10 (145 aa).

Residues 1–21 (MYPAHLLVLLAVCVSLLGASA) form the signal peptide. A propeptide spanning residues 22–27 (IPPLPL) is cleaved from the precursor. 7 cysteine pairs are disulfide-bonded: Cys38/Cys98, Cys54/Cys144, Cys56/Cys72, Cys71/Cys125, Cys78/Cys118, Cys87/Cys111, and Cys105/Cys116. Tyr55, Gly57, and Gly59 together coordinate Ca(2+). His75 is an active-site residue. Position 76 (Asp76) interacts with Ca(2+). Asp119 is a catalytic residue.

Belongs to the phospholipase A2 family. Group I subfamily. D49 sub-subfamily. Requires Ca(2+) as cofactor. As to expression, expressed by the venom gland.

It is found in the secreted. The enzyme catalyses a 1,2-diacyl-sn-glycero-3-phosphocholine + H2O = a 1-acyl-sn-glycero-3-phosphocholine + a fatty acid + H(+). Functionally, PLA2 catalyzes the calcium-dependent hydrolysis of the 2-acyl groups in 3-sn-phosphoglycerides. This chain is Basic phospholipase A2 cPt10, found in Laticauda semifasciata (Black-banded sea krait).